Consider the following 193-residue polypeptide: Heat shock protein beta-1 (193 aa).

2 positions are modified to phosphoserine: Ser-15 and Ser-80. Residues 74 to 182 (RALSELSSGI…QSSEITIPVT (109 aa)) enclose the sHSP domain.

This sequence belongs to the small heat shock protein (HSP20) family. As to quaternary structure, homooligomer. Homodimer; becomes monomeric upon activation. Heterooligomer. Smooth, cardiac and skeletal muscle, hardly detectable in fibroblasts or focal contacts.

The protein localises to the cytoplasm. Its subcellular location is the nucleus. The protein resides in the cytoskeleton. It is found in the spindle. Its function is as follows. Small heat shock protein which functions as a molecular chaperone probably maintaining denatured proteins in a folding-competent state. Plays a role in stress resistance and actin organization. In Gallus gallus (Chicken), this protein is Heat shock protein beta-1 (HSPB1).